Consider the following 394-residue polypeptide: ATP phosphoribosyltransferase regulatory subunit (394 aa).

The protein belongs to the class-II aminoacyl-tRNA synthetase family. HisZ subfamily. As to quaternary structure, heteromultimer composed of HisG and HisZ subunits.

The protein localises to the cytoplasm. Its pathway is amino-acid biosynthesis; L-histidine biosynthesis; L-histidine from 5-phospho-alpha-D-ribose 1-diphosphate: step 1/9. In terms of biological role, required for the first step of histidine biosynthesis. May allow the feedback regulation of ATP phosphoribosyltransferase activity by histidine. The chain is ATP phosphoribosyltransferase regulatory subunit from Teredinibacter turnerae (strain ATCC 39867 / T7901).